Reading from the N-terminus, the 377-residue chain is Mitogen-activated protein kinase mpkC (377 aa).

The region spanning 20 to 299 is the Protein kinase domain; sequence YVNPQPIGMG…AQDALRHPYL (280 aa). ATP-binding positions include 26-34 and K49; that span reads IGMGSFGLV. D141 acts as the Proton acceptor in catalysis. Residue T171 is modified to Phosphothreonine. The TXY motif lies at 171-173; it reads TGY. Y173 is subject to Phosphotyrosine.

This sequence belongs to the protein kinase superfamily. Ser/Thr protein kinase family. MAP kinase subfamily. HOG1 sub-subfamily. Requires Mg(2+) as cofactor. In terms of processing, dually phosphorylated on Thr-171 and Tyr-173, which activates the enzyme.

It catalyses the reaction L-seryl-[protein] + ATP = O-phospho-L-seryl-[protein] + ADP + H(+). The catalysed reaction is L-threonyl-[protein] + ATP = O-phospho-L-threonyl-[protein] + ADP + H(+). Its activity is regulated as follows. Activated by tyrosine and threonine phosphorylation. Mitogen-activated protein kinase required for growth on media where sorbitol or mannitol is the sole carbon source. The polypeptide is Mitogen-activated protein kinase mpkC (mpkc) (Neosartorya fischeri (strain ATCC 1020 / DSM 3700 / CBS 544.65 / FGSC A1164 / JCM 1740 / NRRL 181 / WB 181) (Aspergillus fischerianus)).